The sequence spans 734 residues: Regulator of G-protein signaling rgs-6 (734 aa).

The disordered stretch occupies residues 1–24 (MSTPCSGNEPATPTNTSPNNETSN). The span at 8-24 (NEPATPTNTSPNNETSN) shows a compositional bias: low complexity. Positions 46 to 157 (IFKKVIRDPV…YDCWPRFLRS (112 aa)) constitute an RGS domain. Disordered stretches follow at residues 162-236 (QPSF…SPTH), 489-515 (HAVS…YSPA), and 538-734 (VNAG…AAYV). The span at 166–176 (TDEELAADDED) shows a compositional bias: acidic residues. The span at 180 to 191 (HSQPTSLNNTNE) shows a compositional bias: polar residues. Positions 194 to 208 (AAAQQSQPAPNAPAA) are enriched in low complexity. Composition is skewed to polar residues over residues 494-506 (SDPN…SQDR) and 538-557 (VNAG…SKNR). 2 stretches are compositionally biased toward basic and acidic residues: residues 563–585 (SKTE…RSDD) and 606–619 (TTEE…KSGD). Over residues 642-694 (AAAAAAGASPSTSAPSTSTSVQTKTTTSPTKSPTSTTITTSGTTTSATSSVAT) the composition is skewed to low complexity. Composition is skewed to polar residues over residues 705 to 715 (SASTPATSSQL) and 724 to 734 (RESSWQTAAYV).

The polypeptide is Regulator of G-protein signaling rgs-6 (Caenorhabditis elegans).